Here is a 673-residue protein sequence, read N- to C-terminus: Thimet-like oligopeptidase (673 aa).

His-465 serves as a coordination point for Zn(2+). The active site involves Glu-466. 2 residues coordinate Zn(2+): His-469 and His-472.

It belongs to the peptidase M3 family. The cofactor is Zn(2+).

The chain is Thimet-like oligopeptidase from Dictyostelium discoideum (Social amoeba).